Consider the following 629-residue polypeptide: tRNA uridine 5-carboxymethylaminomethyl modification enzyme MnmG (629 aa).

13–18 (GGGHAG) is a binding site for FAD. 273 to 287 (GPRYCPSIEDKIHRF) is an NAD(+) binding site.

It belongs to the MnmG family. In terms of assembly, homodimer. Heterotetramer of two MnmE and two MnmG subunits. It depends on FAD as a cofactor.

The protein localises to the cytoplasm. Functionally, NAD-binding protein involved in the addition of a carboxymethylaminomethyl (cmnm) group at the wobble position (U34) of certain tRNAs, forming tRNA-cmnm(5)s(2)U34. This chain is tRNA uridine 5-carboxymethylaminomethyl modification enzyme MnmG, found in Shewanella amazonensis (strain ATCC BAA-1098 / SB2B).